The following is a 550-amino-acid chain: Chaperonin GroEL (550 aa).

ATP-binding positions include 29-32, K50, 86-90, G418, and D499; these read TAGP and DGTTT.

Belongs to the chaperonin (HSP60) family. In terms of assembly, forms a cylinder of 14 subunits composed of two heptameric rings stacked back-to-back. Interacts with the co-chaperonin GroES.

The protein localises to the cytoplasm. It carries out the reaction ATP + H2O + a folded polypeptide = ADP + phosphate + an unfolded polypeptide.. Its function is as follows. Together with its co-chaperonin GroES, plays an essential role in assisting protein folding. The GroEL-GroES system forms a nano-cage that allows encapsulation of the non-native substrate proteins and provides a physical environment optimized to promote and accelerate protein folding. The polypeptide is Chaperonin GroEL (Wolbachia sp. subsp. Brugia malayi (strain TRS)).